A 141-amino-acid polypeptide reads, in one-letter code: Large ribosomal subunit protein uL14 (141 aa).

Belongs to the universal ribosomal protein uL14 family. Part of the 50S ribosomal subunit. Forms a cluster with proteins L3 and L24e, part of which may contact the 16S rRNA in 2 intersubunit bridges.

In terms of biological role, binds to 23S rRNA. Forms part of two intersubunit bridges in the 70S ribosome. This is Large ribosomal subunit protein uL14 from Pyrococcus abyssi (strain GE5 / Orsay).